Reading from the N-terminus, the 210-residue chain is 3-hexulose-6-phosphate synthase (210 aa).

Belongs to the HPS/KGPDC family. HPS subfamily.

It carries out the reaction D-ribulose 5-phosphate + formaldehyde = D-arabino-hex-3-ulose 6-phosphate. Its pathway is one-carbon metabolism; formaldehyde assimilation via RuMP pathway; D-fructose 6-phosphate from D-ribulose 5-phosphate and formaldehyde: step 1/2. Its function is as follows. Catalyzes the condensation of ribulose 5-phosphate with formaldehyde to form 3-hexulose 6-phosphate. The chain is 3-hexulose-6-phosphate synthase from Staphylococcus haemolyticus (strain JCSC1435).